Reading from the N-terminus, the 1183-residue chain is ATP-dependent helicase/nuclease subunit A (1183 aa).

Positions 3 to 461 (VQWTDEQQRA…IDLTKNFRSR (459 aa)) constitute a UvrD-like helicase ATP-binding domain. 24 to 31 (AAAGSGKT) contributes to the ATP binding site. A UvrD-like helicase C-terminal domain is found at 473–769 (RQVMDEAVGE…RIMTIHQSKG (297 aa)).

It belongs to the helicase family. AddA subfamily. Heterodimer of AddA and AddB/RexB. Mg(2+) serves as cofactor.

It catalyses the reaction Couples ATP hydrolysis with the unwinding of duplex DNA by translocating in the 3'-5' direction.. It carries out the reaction ATP + H2O = ADP + phosphate + H(+). Functionally, the heterodimer acts as both an ATP-dependent DNA helicase and an ATP-dependent, dual-direction single-stranded exonuclease. Recognizes the chi site generating a DNA molecule suitable for the initiation of homologous recombination. The AddA nuclease domain is required for chi fragment generation; this subunit has the helicase and 3' -&gt; 5' nuclease activities. In Exiguobacterium sibiricum (strain DSM 17290 / CCUG 55495 / CIP 109462 / JCM 13490 / 255-15), this protein is ATP-dependent helicase/nuclease subunit A.